The sequence spans 261 residues: Succinate dehydrogenase iron-sulfur subunit (261 aa).

A 2Fe-2S ferredoxin-type domain is found at arginine 28–methionine 119. [2Fe-2S] cluster-binding residues include cysteine 80, cysteine 85, and cysteine 100. The region spanning aspartate 161 to tyrosine 191 is the 4Fe-4S ferredoxin-type domain. The [4Fe-4S] cluster site is built by cysteine 171, cysteine 174, and cysteine 177. Cysteine 181 contacts [3Fe-4S] cluster. An a ubiquinone-binding site is contributed by tryptophan 186. [3Fe-4S] cluster contacts are provided by cysteine 228 and cysteine 234. Cysteine 238 contributes to the [4Fe-4S] cluster binding site.

The protein belongs to the succinate dehydrogenase/fumarate reductase iron-sulfur protein family. In terms of assembly, part of an enzyme complex containing four subunits: a flavoprotein, an iron-sulfur, cytochrome b-556, and a hydrophobic anchor protein. The cofactor is [2Fe-2S] cluster. Requires [3Fe-4S] cluster as cofactor. [4Fe-4S] cluster serves as cofactor.

The catalysed reaction is a quinone + succinate = fumarate + a quinol. It participates in carbohydrate metabolism; tricarboxylic acid cycle; fumarate from succinate (bacterial route): step 1/1. The chain is Succinate dehydrogenase iron-sulfur subunit (sdhB) from Rickettsia typhi (strain ATCC VR-144 / Wilmington).